Consider the following 198-residue polypeptide: Nuclear transcription factor Y subunit A-4 (198 aa).

The tract at residues 1-47 (MTSSVHELSDNNESHAKKERPDSQTRPQVPSGRSSESIDTNSVYSEP) is disordered. Residues 7–23 (ELSDNNESHAKKERPDS) are compositionally biased toward basic and acidic residues. Polar residues predominate over residues 24–44 (QTRPQVPSGRSSESIDTNSVY). A Subunit association domain (SAD) motif is present at residues 101 to 124 (FVNAKQYHGILRRRQSRAKLEARN). The segment at residues 131 to 156 (KPYMHESRHLHAIRRPRGCGGRFLNA) is a DNA-binding region (NFYA/HAP2-type). The disordered stretch occupies residues 136–198 (ESRHLHAIRR…MATSGPNGRS (63 aa)). Over residues 156–166 (AKKENGDHKEE) the composition is skewed to basic and acidic residues.

The protein belongs to the NFYA/HAP2 subunit family. As to quaternary structure, heterotrimeric transcription factor composed of three components, NF-YA, NF-YB and NF-YC. NF-YB and NF-YC must interact and dimerize for NF-YA association and DNA binding. Expressed in stems, caulines, and senescent flowers.

Its subcellular location is the nucleus. Functionally, stimulates the transcription of various genes by recognizing and binding to a CCAAT motif in promoters. This is Nuclear transcription factor Y subunit A-4 (NFYA4) from Arabidopsis thaliana (Mouse-ear cress).